A 646-amino-acid polypeptide reads, in one-letter code: Nucleoside triphosphatase I (646 aa).

Positions 48-213 constitute a Helicase ATP-binding domain; that stretch reads FIGLKNLNSM…NNLIGLLRPN (166 aa). ATP is bound at residue 61–68; that stretch reads WDTGMGKT. The DEXH box signature appears at 151–154; it reads DEVH. The region spanning 377–540 is the Helicase C-terminal domain; sequence YIEACRIILN…KINVVFDLLK (164 aa). Residues 466-532 are binding to the cap-specific mRNA (nucleoside-2'-O-)-methyltransferase; it reads DIIILDMPWN…DIIKDKQSKI (67 aa).

This sequence belongs to the helicase family. NPH I subfamily. In terms of assembly, monomer. Interacts (via C-terminus) with RAP94 (via N-terminus). Interacts with the cap-specific mRNA (nucleoside-2'-O-)-methyltransferase.

The protein resides in the virion. It carries out the reaction a ribonucleoside 5'-triphosphate + H2O = a ribonucleoside 5'-diphosphate + phosphate + H(+). Its function is as follows. DNA-dependent ATPase required for providing the needed energy to achieve the termination of early transcripts. Acts in concert with the RAP94 subunit of the virion RNA polymerase and the capping enzyme/VTF to catalyze release of UUUUUNU-containing nascent RNA from the elongation complex. NPH-I must bind ssDNA in order to exhibit ATPase activity. The polypeptide is Nucleoside triphosphatase I (NPH1) (Heliothis armigera entomopoxvirus (HaEPV)).